The primary structure comprises 94 residues: Co-chaperonin GroES (94 aa).

It belongs to the GroES chaperonin family. As to quaternary structure, heptamer of 7 subunits arranged in a ring. Interacts with the chaperonin GroEL.

Its subcellular location is the cytoplasm. Functionally, together with the chaperonin GroEL, plays an essential role in assisting protein folding. The GroEL-GroES system forms a nano-cage that allows encapsulation of the non-native substrate proteins and provides a physical environment optimized to promote and accelerate protein folding. GroES binds to the apical surface of the GroEL ring, thereby capping the opening of the GroEL channel. This Clostridioides difficile (Peptoclostridium difficile) protein is Co-chaperonin GroES.